The primary structure comprises 186 residues: Glutathione-independent glyoxalase DJR-1.2 (186 aa).

Active-site residues include E20, C105, and H124.

This sequence belongs to the peptidase C56 family. DJ-1 subfamily. Expressed in various tissues, including pharyngeal muscles, pharynx-intestinal valve, ventral nerve cord, spermatheca, rectal gland, inner labial (IL) cells of head neurons, phasmid (PHA/PHB) neurons in tail and supporting sheath/socket cells, as well as in head mesodermal cells (HMC), excretory canals and coelomocytes.

The protein resides in the cytoplasm. It catalyses the reaction methylglyoxal + H2O = (R)-lactate + H(+). Functionally, catalyzes the conversion of methylglyoxal (MG) or glyoxal (GO) to D-lactate or glycolic acid respectively in a single glutathione (GSH)-independent step. May play a role in detoxifying endogenously produced glyoxals. Involved in protection against glyoxal-induced cell death. Protects dopaminergic neurons from glyoxal-dependent neuronal degeneration. The chain is Glutathione-independent glyoxalase DJR-1.2 from Caenorhabditis elegans.